Consider the following 129-residue polypeptide: Small ribosomal subunit protein uS11 (129 aa).

Belongs to the universal ribosomal protein uS11 family. In terms of assembly, part of the 30S ribosomal subunit. Interacts with proteins S7 and S18. Binds to IF-3.

Functionally, located on the platform of the 30S subunit, it bridges several disparate RNA helices of the 16S rRNA. Forms part of the Shine-Dalgarno cleft in the 70S ribosome. This is Small ribosomal subunit protein uS11 from Psychrobacter arcticus (strain DSM 17307 / VKM B-2377 / 273-4).